Here is a 536-residue protein sequence, read N- to C-terminus: MRDIEEIIKEIGLGRDDYELYGRYMAKLDLGLQNRGRPRAKLILVTAMTPTPAGEGKTTTTIGLGQAMKKLGKNVAIAIREPSLGPCFGIKGGATGGGKSKVEPSDRINLFFTGDFPTITAAHNLLSAMINNHMYHGNELNLDPKRITFPRTIDMNDRSLRSILVGVGPRDMGVLAGDSFVITPASEVMAITGLSLNYQDLKARLSRILAGFTTKNKPVFAGDLKAEGSMAALLRDALKPNLVQTTEGVPAFVHTGPFGNIAHGTSSLVADKIALNLFDYVITEAGFGSDLGAEKFFNLASRIGDLPINAVVLVATIRAIKHHGGSKKEGEDIDAVKTGSKNLIRHVQNIRNFGIDPVVAVNRFPTDTDGEIRALGEILDSNGIKWALSEVFAKGGEGGIDLANKVLASLGSHEIKRTYDLKDDIRTKIEKIARNVYGADGVIFEKKALSDMKKAEEIMENPYVCMAKTQYSFSDDASLLNDPHGFTIKVQSINISSGAGFVVPILGEIMTMPGLPKHPAAENIDLTDSGEITGLF.

ATP is bound at residue 51–58 (TPAGEGKT).

The protein belongs to the formate--tetrahydrofolate ligase family.

The catalysed reaction is (6S)-5,6,7,8-tetrahydrofolate + formate + ATP = (6R)-10-formyltetrahydrofolate + ADP + phosphate. It functions in the pathway one-carbon metabolism; tetrahydrofolate interconversion. This is Formate--tetrahydrofolate ligase from Thermoplasma acidophilum (strain ATCC 25905 / DSM 1728 / JCM 9062 / NBRC 15155 / AMRC-C165).